The sequence spans 180 residues: Amnesiac neuropeptides (180 aa).

Positions 1–32 are cleaved as a signal peptide; the sequence is MRSFCCCFYPAAVALHCVLLFYTFFLLFRASA. 2 propeptides span residues 33 to 35 and 152 to 180; these read LRR and GRRSVPRGQPKFSRENPRALSPSLLGEMR. Residues 155-180 are disordered; the sequence is SVPRGQPKFSRENPRALSPSLLGEMR.

In terms of tissue distribution, enriched expression in the embryonic and larval nervous systems. Strongly expressed in two large neurons that project over all the lobes of the mushroom bodies.

It is found in the secreted. Its function is as follows. Required for associative learning and memory in adults. Expression pattern suggests a modulatory role in memory formation. Controls neurotransmitter-mediated signaling pathways associated with the structure of the larval peripheral nerve. The polypeptide is Amnesiac neuropeptides (amn) (Drosophila melanogaster (Fruit fly)).